The sequence spans 146 residues: uncharacterized protein (146 aa).

Positions 7–146 constitute an N-acetyltransferase domain; it reads LQINYKTDEL…EGHDILIWNP (140 aa).

This is an uncharacterized protein from Staphylococcus epidermidis (strain ATCC 35984 / DSM 28319 / BCRC 17069 / CCUG 31568 / BM 3577 / RP62A).